The chain runs to 1597 residues: Pentafunctional AROM polypeptide (1597 aa).

The tract at residues 1 to 384 (MGVPTKISIL…HEPRASTVSN (384 aa)) is 3-dehydroquinate synthase. Residues 44–46 (DTN), 81–84 (ESSK), 114–116 (GGV), and Asp-119 each bind NAD(+). Arg-130 contacts 7-phospho-2-dehydro-3-deoxy-D-arabino-heptonate. Residue 139–140 (TT) coordinates NAD(+). Positions 146 and 152 each coordinate 7-phospho-2-dehydro-3-deoxy-D-arabino-heptonate. Lys-161 is an NAD(+) binding site. Asn-162 is a binding site for 7-phospho-2-dehydro-3-deoxy-D-arabino-heptonate. NAD(+) is bound by residues 179 to 182 (FLNT) and Asn-190. Zn(2+) is bound at residue Glu-194. Residues 194–197 (EVIK) and Lys-250 each bind 7-phospho-2-dehydro-3-deoxy-D-arabino-heptonate. Glu-260 (proton acceptor; for 3-dehydroquinate synthase activity) is an active-site residue. 7-phospho-2-dehydro-3-deoxy-D-arabino-heptonate-binding positions include 264-268 (RNLLN) and His-271. Residue His-271 participates in Zn(2+) binding. Residue His-275 is the Proton acceptor; for 3-dehydroquinate synthase activity of the active site. 7-phospho-2-dehydro-3-deoxy-D-arabino-heptonate is bound by residues His-287 and Lys-356. His-287 is a Zn(2+) binding site. The tract at residues 397–842 (VSPGVPKNLN…WDSLAQTFKV (446 aa)) is EPSP synthase. Cys-824 acts as the For EPSP synthase activity in catalysis. The interval 866 to 1057 (ASIFIIGMRG…RSKENTFFVS (192 aa)) is shikimate kinase. ATP is bound at residue 872 to 879 (GMRGAGKT). Positions 1058–1278 (LTLPDLAPAA…AAPGQLSARE (221 aa)) are 3-dehydroquinase. The active-site Proton acceptor; for 3-dehydroquinate dehydratase activity is the His-1181. The Schiff-base intermediate with substrate; for 3-dehydroquinate dehydratase activity role is filled by Lys-1209. A shikimate dehydrogenase region spans residues 1291–1597 (SKKFAVIGNP…VQPKDDDIST (307 aa)).

In the N-terminal section; belongs to the sugar phosphate cyclases superfamily. Dehydroquinate synthase family. It in the 2nd section; belongs to the EPSP synthase family. The protein in the 3rd section; belongs to the shikimate kinase family. This sequence in the 4th section; belongs to the type-I 3-dehydroquinase family. In the C-terminal section; belongs to the shikimate dehydrogenase family. As to quaternary structure, homodimer. Zn(2+) is required as a cofactor.

The protein resides in the cytoplasm. The enzyme catalyses 7-phospho-2-dehydro-3-deoxy-D-arabino-heptonate = 3-dehydroquinate + phosphate. It carries out the reaction 3-dehydroquinate = 3-dehydroshikimate + H2O. The catalysed reaction is shikimate + NADP(+) = 3-dehydroshikimate + NADPH + H(+). It catalyses the reaction shikimate + ATP = 3-phosphoshikimate + ADP + H(+). The enzyme catalyses 3-phosphoshikimate + phosphoenolpyruvate = 5-O-(1-carboxyvinyl)-3-phosphoshikimate + phosphate. The protein operates within metabolic intermediate biosynthesis; chorismate biosynthesis; chorismate from D-erythrose 4-phosphate and phosphoenolpyruvate: step 2/7. It participates in metabolic intermediate biosynthesis; chorismate biosynthesis; chorismate from D-erythrose 4-phosphate and phosphoenolpyruvate: step 3/7. It functions in the pathway metabolic intermediate biosynthesis; chorismate biosynthesis; chorismate from D-erythrose 4-phosphate and phosphoenolpyruvate: step 4/7. Its pathway is metabolic intermediate biosynthesis; chorismate biosynthesis; chorismate from D-erythrose 4-phosphate and phosphoenolpyruvate: step 5/7. The protein operates within metabolic intermediate biosynthesis; chorismate biosynthesis; chorismate from D-erythrose 4-phosphate and phosphoenolpyruvate: step 6/7. Functionally, the AROM polypeptide catalyzes 5 consecutive enzymatic reactions in prechorismate polyaromatic amino acid biosynthesis. The chain is Pentafunctional AROM polypeptide from Blastomyces gilchristii (strain SLH14081) (Blastomyces dermatitidis).